The primary structure comprises 454 residues: Tyrosine aminotransferase (454 aa).

Met-1 bears the N-acetylmethionine mark. Lys-280 is subject to N6-(pyridoxal phosphate)lysine. Phosphoserine is present on Ser-448.

The protein belongs to the class-I pyridoxal-phosphate-dependent aminotransferase family. In terms of assembly, homodimer. Pyridoxal 5'-phosphate is required as a cofactor.

It carries out the reaction L-tyrosine + 2-oxoglutarate = 3-(4-hydroxyphenyl)pyruvate + L-glutamate. Its pathway is amino-acid degradation; L-phenylalanine degradation; acetoacetate and fumarate from L-phenylalanine: step 2/6. In terms of biological role, transaminase involved in tyrosine breakdown. Converts tyrosine to p-hydroxyphenylpyruvate. Can catalyze the reverse reaction, using glutamic acid, with 2-oxoglutarate as cosubstrate (in vitro). Has much lower affinity and transaminase activity for phenylalanine. The chain is Tyrosine aminotransferase (Tat) from Mus musculus (Mouse).